The sequence spans 32 residues: Periplasmic [NiFeSe] hydrogenase small subunit (32 aa).

The [4Fe-4S] cluster site is built by C18 and C21.

Belongs to the [NiFe]/[NiFeSe] hydrogenase small subunit family. In terms of assembly, heterodimer of a large and a small subunit. The cofactor is [3Fe-4S] cluster. [4Fe-4S] cluster is required as a cofactor.

The protein localises to the periplasm. It catalyses the reaction H2 + A = AH2. This Desulfomicrobium norvegicum (strain DSM 1741 / NCIMB 8310) (Desulfovibrio baculatus (strain Norway 4)) protein is Periplasmic [NiFeSe] hydrogenase small subunit.